The primary structure comprises 467 residues: L-histidine transporter HutT (467 aa).

13 helical membrane passes run 18–38 (FMALGSAIGTGLFYGSASAIQ), 39–59 (MAGPAVLLAYLIGGAAVFMVM), 71–91 (VAGSFGHYATTYLGPMAGFIL), 99–119 (MVIVAIADVTAFGIYMGFWFP), 125–145 (IWVLGIVFLIGGLNLCNVKVF), 155–175 (LKVGAIVAMILAGLGIMAFGF), 200–220 (VGGLIASFAVVMFAFGGIEII), 245–265 (ILLFYVLTLFVLMCLYPWPQI), 280–300 (GIGSAAAVLNVVVISAAISAI), 334–354 (WMTVVVMGAALLIGVLLNYLI), 358–378 (VFLLIASIATFATVWVWLMIL), 402–422 (FWPYGPAMAIAFMVFIFGVLG), and 429–449 (AALIVGVIWVVFLVASYLLWC).

It belongs to the amino acid-polyamine-organocation (APC) superfamily. Amino acid transporter (AAT) (TC 2.A.3.1) family.

It is found in the cell inner membrane. The enzyme catalyses L-histidine(out) + n H(+)(out) = L-histidine(in) + n H(+)(in). With respect to regulation, transport activity is inhibited by the proton ionophores carbonyl cyanide m-chlorophenyl hydrazine (CCCP) and 2,4-dinitrophenol (DNP), but not by valinomycin, nigericin and nonactin. Uptake is reduced in the presence of the sulfhydryl reagent N-ethylmaleimide (NEM). Uptake is not affected by arginine, lysine, proline or compounds structurally related to histidine such as imidazole, 3-amino-1,2,4-triazole and urocanate. Only 1,2,4-triazolyl-3-alanine reduces the rate of L-histidine uptake significantly. Functionally, major high-affinity histidine transporter. Binds and catalyzes the uptake of histidine into the cell. Functions as an histidine:proton symporter with high specificity for histidine. The polypeptide is L-histidine transporter HutT (Pseudomonas putida (strain ATCC 47054 / DSM 6125 / CFBP 8728 / NCIMB 11950 / KT2440)).